The following is a 147-amino-acid chain: Hemoglobin subunit deltaH (147 aa).

The Globin domain occupies R3–H147. H64 and H93 together coordinate heme b.

The protein belongs to the globin family. In terms of assembly, heterotetramer of two delta chains and two alpha chains. As to expression, red blood cells.

This is Hemoglobin subunit deltaH from Heterohyrax brucei (Yellow-spotted hyrax).